A 206-amino-acid chain; its full sequence is MSRIHNDPKVLLTGTTTVGVVTKEGVVLATDRRVTAGYYIAHRKGRKIWKIDNHAAATMSGAVADVQMILNELTHLAMNYRITHQAPVPIKTLANYASVVMFYSRPMIYIAHMIIGGVDNEEGPVLYAVDWYGSFTREERFMSTGSGSPTAFGVLEDGYRDDMSLDDAVKLATRAVRAAMLHDPGSGEGVDVITITKEAGYREVQA.

The propeptide at 1–14 (MSRIHNDPKVLLTG) is removed in mature form; by autocatalysis. The Nucleophile role is filled by threonine 15.

This sequence belongs to the peptidase T1B family. In terms of assembly, the 20S proteasome core is composed of 14 alpha and 14 beta subunits that assemble into four stacked heptameric rings, resulting in a barrel-shaped structure. The two inner rings, each composed of seven catalytic beta subunits, are sandwiched by two outer rings, each composed of seven alpha subunits. The catalytic chamber with the active sites is on the inside of the barrel. Has a gated structure, the ends of the cylinder being occluded by the N-termini of the alpha-subunits. Is capped at one or both ends by the proteasome regulatory ATPase, PAN.

The protein localises to the cytoplasm. The enzyme catalyses Cleavage of peptide bonds with very broad specificity.. Its activity is regulated as follows. The formation of the proteasomal ATPase PAN-20S proteasome complex, via the docking of the C-termini of PAN into the intersubunit pockets in the alpha-rings, triggers opening of the gate for substrate entry. Interconversion between the open-gate and close-gate conformations leads to a dynamic regulation of the 20S proteasome proteolysis activity. Component of the proteasome core, a large protease complex with broad specificity involved in protein degradation. In Caldivirga maquilingensis (strain ATCC 700844 / DSM 13496 / JCM 10307 / IC-167), this protein is Proteasome subunit beta 1.